A 64-amino-acid polypeptide reads, in one-letter code: Conotoxin Pn-B01121 (64 aa).

The first 22 residues, 1-22 (MCCLPVFVILLLLIASAPSVDA), serve as a signal peptide directing secretion. A propeptide spanning residues 23-48 (LPKTKDDMSLASFHDNAKRTLQILSN) is cleaved from the precursor. Tryptophan 63 carries the tryptophan amide modification.

Belongs to the conotoxin T superfamily. Contains 2 disulfide bonds that can be either 'C1-C3, C2-C4' or 'C1-C4, C2-C3', since these disulfide connectivities have been observed for conotoxins with cysteine framework V (for examples, see AC P0DQQ7 and AC P81755). In terms of tissue distribution, expressed by the venom duct.

It is found in the secreted. This is Conotoxin Pn-B01121 from Conus pennaceus (Feathered cone).